Here is a 120-residue protein sequence, read N- to C-terminus: Reprimo-like protein (120 aa).

Residues 67-87 (VAQIAVLCVLSLTVVFGVFFL) form a helical membrane-spanning segment. Phosphoserine is present on Ser-109.

This sequence belongs to the reprimo family.

It localises to the membrane. This chain is Reprimo-like protein (RPRML), found in Homo sapiens (Human).